The chain runs to 154 residues: Ribosomal RNA large subunit methyltransferase H (154 aa).

Residues leucine 70, glycine 102, and 121–126 (LSRMTL) contribute to the S-adenosyl-L-methionine site.

The protein belongs to the RNA methyltransferase RlmH family. In terms of assembly, homodimer.

Its subcellular location is the cytoplasm. It carries out the reaction pseudouridine(1915) in 23S rRNA + S-adenosyl-L-methionine = N(3)-methylpseudouridine(1915) in 23S rRNA + S-adenosyl-L-homocysteine + H(+). Its function is as follows. Specifically methylates the pseudouridine at position 1915 (m3Psi1915) in 23S rRNA. The chain is Ribosomal RNA large subunit methyltransferase H from Geobacter sp. (strain M21).